Reading from the N-terminus, the 127-residue chain is MVKRIKNMSELKELFSDAGNKLVVVEFSAKWCGPCKTIAPVFQAMSLKYQNVTFAQVDVDSSKELAEHCDITMLPTFQMFKYTQKVTPFSRLKRVLCCLRSGPKSKMIFECHGADAKQLEKKIQELM.

A Thioredoxin domain is found at 2-127 (VKRIKNMSEL…QLEKKIQELM (126 aa)). An intrachain disulfide couples Cys-32 to Cys-35.

Belongs to the thioredoxin family. Testis-specific. Only expressed during spermiogenesis, prominently in the Golgi apparatus of pachytene spermatocytes and round and elongated spermatids, with a transient localization in the developing acrosome of round spermatids (at protein level).

Its subcellular location is the cytoplasm. The protein localises to the golgi apparatus. Its function is as follows. May be required for post-translational modifications of proteins required for acrosomal biogenesis. May act by reducing disulfide bonds within the sperm. In Mus musculus (Mouse), this protein is Thioredoxin domain-containing protein 8 (Txndc8).